The primary structure comprises 640 residues: G protein-coupled receptor kinase 1 (640 aa).

Residues 1-201 (MEIENIVANT…LEKRPVDKHT (201 aa)) form an N-terminal region. Positions 52-187 (YAFVVEKQPI…IQTMYFHRFL (136 aa)) constitute an RGS domain. Positions 202–469 (FRLYRVLGKG…AEEIRAHPFF (268 aa)) constitute a Protein kinase domain. ATP is bound by residues 208 to 216 (LGKGGFGEV) and lysine 231. Aspartate 327 functions as the Proton acceptor in the catalytic mechanism. The AGC-kinase C-terminal domain maps to 479–544 (EPVPWKKMEA…GCVSIPWQSE (66 aa)). The disordered stretch occupies residues 610-640 (GVDQQQPSTSAKPAAVRSSRAASASGRTSMI). The span at 619-640 (SAKPAAVRSSRAASASGRTSMI) shows a compositional bias: low complexity.

The protein belongs to the protein kinase superfamily. AGC Ser/Thr protein kinase family. GPRK subfamily.

It catalyses the reaction [G-protein-coupled receptor] + ATP = [G-protein-coupled receptor]-phosphate + ADP + H(+). Its function is as follows. Specifically phosphorylates the activated forms of G protein-coupled receptors. The protein is G protein-coupled receptor kinase 1 (grk-1) of Caenorhabditis briggsae.